The chain runs to 561 residues: Oligo-1,6-glucosidase (561 aa).

Catalysis depends on Asp199, which acts as the Nucleophile. Glu256 serves as the catalytic Proton donor.

This sequence belongs to the glycosyl hydrolase 13 family.

It localises to the cytoplasm. It catalyses the reaction Hydrolysis of (1-&gt;6)-alpha-D-glucosidic linkages in some oligosaccharides produced from starch and glycogen by alpha-amylase, and in isomaltose.. The chain is Oligo-1,6-glucosidase (malL) from Halalkalibacterium halodurans (strain ATCC BAA-125 / DSM 18197 / FERM 7344 / JCM 9153 / C-125) (Bacillus halodurans).